The primary structure comprises 123 residues: Small ribosomal subunit protein uS13 (123 aa).

The interval 92–123 is disordered; it reads HRRGLPVRGQKTKTNARTRKGPKKLVVSRKKK.

This sequence belongs to the universal ribosomal protein uS13 family. Part of the 30S ribosomal subunit. Forms a loose heterodimer with protein S19. Forms two bridges to the 50S subunit in the 70S ribosome.

Located at the top of the head of the 30S subunit, it contacts several helices of the 16S rRNA. In the 70S ribosome it contacts the 23S rRNA (bridge B1a) and protein L5 of the 50S subunit (bridge B1b), connecting the 2 subunits; these bridges are implicated in subunit movement. Contacts the tRNAs in the A and P-sites. This chain is Small ribosomal subunit protein uS13, found in Clostridium tetani (strain Massachusetts / E88).